We begin with the raw amino-acid sequence, 141 residues long: Hemoglobin subunit alpha (141 aa).

A Globin domain is found at 1–141 (VLSSDDKCNV…VSSVLTSKYR (141 aa)). O2 is bound at residue histidine 58. Histidine 87 serves as a coordination point for heme b.

This sequence belongs to the globin family. In terms of assembly, heterotetramer of two alpha chains and two beta chains. In terms of tissue distribution, red blood cells.

Its function is as follows. Involved in oxygen transport from the lung to the various peripheral tissues. Has antimicrobial activity against B.subtilis ATCC 6633. Has antioxidant activity. This is Hemoglobin subunit alpha from Crocodylus siamensis (Siamese crocodile).